We begin with the raw amino-acid sequence, 506 residues long: D-alanine--D-alanyl carrier protein ligase (506 aa).

Thr152–Ser153 serves as a coordination point for ATP. Asp197 serves as a coordination point for D-alanine. Asn292–Thr297 contributes to the ATP binding site. Val301 serves as a coordination point for D-alanine. ATP-binding positions include Asp383, Tyr395 to Arg398, and Lys494. Lys494 provides a ligand contact to D-alanine.

This sequence belongs to the ATP-dependent AMP-binding enzyme family. DltA subfamily.

The protein resides in the cytoplasm. The catalysed reaction is holo-[D-alanyl-carrier protein] + D-alanine + ATP = D-alanyl-[D-alanyl-carrier protein] + AMP + diphosphate. It functions in the pathway cell wall biogenesis; lipoteichoic acid biosynthesis. In terms of biological role, catalyzes the first step in the D-alanylation of lipoteichoic acid (LTA), the activation of D-alanine and its transfer onto the D-alanyl carrier protein (Dcp) DltC. In an ATP-dependent two-step reaction, forms a high energy D-alanyl-AMP intermediate, followed by transfer of the D-alanyl residue as a thiol ester to the phosphopantheinyl prosthetic group of the Dcp. D-alanylation of LTA plays an important role in modulating the properties of the cell wall in Gram-positive bacteria, influencing the net charge of the cell wall. The sequence is that of D-alanine--D-alanyl carrier protein ligase from Lacticaseibacillus casei (strain BL23) (Lactobacillus casei).